Consider the following 135-residue polypeptide: Interleukin-4 (135 aa).

The first 24 residues, 1-24 (MGLTSQLIPVLVCLLVCTSHFVHG), serve as a signal peptide directing secretion. Cystine bridges form between cysteine 27-cysteine 135, cysteine 48-cysteine 85, and cysteine 70-cysteine 105. Asparagine 62 is a glycosylation site (N-linked (GlcNAc...) asparagine).

It belongs to the IL-4/IL-13 family.

The protein localises to the secreted. Its function is as follows. Participates in at least several B-cell activation processes as well as of other cell types. It is a costimulator of DNA-synthesis. It induces the expression of class II MHC molecules on resting B-cells. It enhances both secretion and cell surface expression of IgE and IgG1. It also regulates the expression of the low affinity Fc receptor for IgE (CD23) on both lymphocytes and monocytes. Positively regulates IL31RA expression in macrophages. Stimulates autophagy in dendritic cells by interfering with mTORC1 signaling and through the induction of RUFY4. The polypeptide is Interleukin-4 (IL4) (Bos taurus (Bovine)).